A 125-amino-acid chain; its full sequence is Cu-Zn superoxide dismutase-like protein OPG175 (125 aa).

A disulfide bridge connects residues Cys52 and Cys102.

The protein belongs to the Cu-Zn superoxide dismutase family.

The protein resides in the virion. The protein localises to the host cytoplasm. Superoxide dismutase-like protein with no enzymatic activity. The polypeptide is Cu-Zn superoxide dismutase-like protein OPG175 (OPG175) (Vaccinia virus (strain Western Reserve) (VACV)).